Here is a 509-residue protein sequence, read N- to C-terminus: 2,3-bisphosphoglycerate-independent phosphoglycerate mutase (509 aa).

Mn(2+) contacts are provided by aspartate 12 and serine 62. Serine 62 serves as the catalytic Phosphoserine intermediate. Substrate contacts are provided by residues histidine 123, 153–154 (RD), arginine 185, arginine 191, 260–263 (RPDR), and lysine 333. Aspartate 400, histidine 404, aspartate 441, histidine 442, and histidine 460 together coordinate Mn(2+).

It belongs to the BPG-independent phosphoglycerate mutase family. In terms of assembly, monomer. Mn(2+) serves as cofactor.

It catalyses the reaction (2R)-2-phosphoglycerate = (2R)-3-phosphoglycerate. It functions in the pathway carbohydrate degradation; glycolysis; pyruvate from D-glyceraldehyde 3-phosphate: step 3/5. In terms of biological role, catalyzes the interconversion of 2-phosphoglycerate and 3-phosphoglycerate. This chain is 2,3-bisphosphoglycerate-independent phosphoglycerate mutase, found in Clostridium kluyveri (strain ATCC 8527 / DSM 555 / NBRC 12016 / NCIMB 10680 / K1).